A 516-amino-acid chain; its full sequence is Glycosyltransferase-like protein gnt15 (516 aa).

Residues 1 to 24 lie on the Cytoplasmic side of the membrane; it reads MSNFYNNNPRRNTFRLTERIKKKP. The helical; Signal-anchor for type II membrane protein transmembrane segment at 25 to 45 threads the bilayer; it reads YQTLIVFILIFLFLYVFGPFG. Residues 46–516 lie on the Extracellular side of the membrane; the sequence is EKKSNNNNNN…NDNCLTREHW (471 aa). Asn-152 carries N-linked (GlcNAc...) asparagine glycosylation. The disordered stretch occupies residues 199–250; the sequence is DTSNNNNNNNNNNNNNNNNNNNNNNNNNNNNNNNENNDNDNGNNNNNNDNEK. The span at 202–246 shows a compositional bias: low complexity; sequence NNNNNNNNNNNNNNNNNNNNNNNNNNNNNNNENNDNDNGNNNNNN. Asn-386 and Asn-412 each carry an N-linked (GlcNAc...) asparagine glycan.

Belongs to the glycosyltransferase 8 family. Highly divergent.

Its subcellular location is the membrane. May have a role in modulating cell adhesion and glycosylation. Essential for development. The sequence is that of Glycosyltransferase-like protein gnt15 (gnt15) from Dictyostelium discoideum (Social amoeba).